Consider the following 160-residue polypeptide: SsrA-binding protein (160 aa).

The interval Lys131–Asp160 is disordered.

The protein belongs to the SmpB family.

It localises to the cytoplasm. Required for rescue of stalled ribosomes mediated by trans-translation. Binds to transfer-messenger RNA (tmRNA), required for stable association of tmRNA with ribosomes. tmRNA and SmpB together mimic tRNA shape, replacing the anticodon stem-loop with SmpB. tmRNA is encoded by the ssrA gene; the 2 termini fold to resemble tRNA(Ala) and it encodes a 'tag peptide', a short internal open reading frame. During trans-translation Ala-aminoacylated tmRNA acts like a tRNA, entering the A-site of stalled ribosomes, displacing the stalled mRNA. The ribosome then switches to translate the ORF on the tmRNA; the nascent peptide is terminated with the 'tag peptide' encoded by the tmRNA and targeted for degradation. The ribosome is freed to recommence translation, which seems to be the essential function of trans-translation. This is SsrA-binding protein from Azotobacter vinelandii (strain DJ / ATCC BAA-1303).